The following is a 307-amino-acid chain: Protein pid-3 (307 aa).

Component of the pid-1 variant of the PETISCO complex (also called the pid-3, erh-2, tofu-6, and ife-3 small RNA complex) containing at least pid-1, tofu-6, ife-3, pid-3, and erh-2, which is required for the biogenesis of a class of 21 nucleotide PIWI-interacting RNAs (piRNAs) that possess a uracil residue at the 5'-end (also called 21U-RNAs). Within the complex interacts with pid-1; the interaction is direct. Component of the tost-1 variant of the PETISCO complex (also called the pid-3, erh-2, tofu-6, and ife-3 small RNA complex) containing at least tost-1, tofu-6, ife-3, pid-3, and erh-2, which plays an essential role in embryogenesis. Within the complex interacts with tost-1. Within the pid-1 and tost-1 variants of the PETISCO complexes interacts with tofu-6 (via the RRM domain) and erh-2. In contrast to the pid-1 variant of the PETISCO complex, the tost-1 variant of the PETISCO complex plays a minor role in the biogenesis of 21U-RNAs. In terms of tissue distribution, expressed in the germline (at protein level).

It is found in the cytoplasm. The protein localises to the perinuclear region. It localises to the nucleus. Functionally, component of the pid-1 and tost-1 variants of the PETISCO complexes, which have roles in the biogenesis of a class of 21 nucleotide PIWI-interacting RNAs (piRNAs) that possess a uracil residue at the 5'-end (also called 21U-RNAs) and embryogenesis, respectively. Within the pid-1 variant of the PETISCO complex may stabilize 21U-RNA precursor molecules. Promotes the biogenesis of 21U-RNAs. Required for chromosome segregation and cell division in early embryos. The sequence is that of Protein pid-3 from Caenorhabditis elegans.